The primary structure comprises 454 residues: Alpha-1,3-mannosyl-glycoprotein 4-beta-N-acetylglucosaminyltransferase C (454 aa).

At 1-6 the chain is on the cytoplasmic side; that stretch reads MRCHLK. Residues 7 to 24 traverse the membrane as a helical; Signal-anchor for type II membrane protein segment; the sequence is KWVVVAAGLSILTSLYVY. Residues 25–454 lie on the Lumenal side of the membrane; it reads MQRAQSGNLK…VWTVKEDKTI (430 aa). 2 N-linked (GlcNAc...) asparagine glycosylation sites follow: Asn-58 and Asn-189.

Belongs to the glycosyltransferase 54 family. Requires a divalent metal cation as cofactor.

The protein resides in the golgi apparatus membrane. It carries out the reaction N(4)-{beta-D-GlcNAc-(1-&gt;2)-alpha-D-Man-(1-&gt;3)-[beta-D-GlcNAc-(1-&gt;2)-alpha-D-Man-(1-&gt;6)]-beta-D-Man-(1-&gt;4)-beta-D-GlcNAc-(1-&gt;4)-beta-D-GlcNAc}-L-asparaginyl-[protein] + UDP-N-acetyl-alpha-D-glucosamine = N(4)-{beta-D-GlcNAc-(1-&gt;2)-[beta-D-GlcNAc-(1-&gt;4)]-alpha-D-Man-(1-&gt;3)-[beta-D-GlcNAc-(1-&gt;2)-alpha-D-Man-(1-&gt;6)]-beta-D-Man-(1-&gt;4)-beta-D-GlcNAc-(1-&gt;4)-beta-D-GlcNAc}-L-asparaginyl-[protein] + UDP + H(+). The protein operates within protein modification; protein glycosylation. Glycosyltransferase that participates in the transfer of N-acetylglucosamine (GlcNAc) to the core mannose residues of N-linked glycans. Catalyzes the formation of the GlcNAcbeta1-4 branch on the GlcNAcbeta1-2Manalpha1-3 arm of the core structure of N-linked glycans. This is Alpha-1,3-mannosyl-glycoprotein 4-beta-N-acetylglucosaminyltransferase C (mgat4c) from Danio rerio (Zebrafish).